The primary structure comprises 192 residues: Putative 3-methyladenine DNA glycosylase (192 aa).

This sequence belongs to the DNA glycosylase MPG family.

In Bdellovibrio bacteriovorus (strain ATCC 15356 / DSM 50701 / NCIMB 9529 / HD100), this protein is Putative 3-methyladenine DNA glycosylase.